The following is a 1040-amino-acid chain: MQVLPPSSTGGPSRLFIMRPVATTLLMVAILLAGIIGYRALPVSALPEVDYPTIQVVTLYPGASPDVMTSAVTAPLERQFGQMSGLKQMSSQSSGGASVITLQFQLTLPLDVAEQEVQAAINAATNLLPSDLPNPPVYSKVNPADPPIMTLAVTSTAMPMTQVEDMVETRVAQKISQISGVGLVTLSGGQRPAVRVKLNAQAIAALGLTSETVRTAITGANVNSAKGSLDGPSRAVTLSANDQMQSAEEYRQLIIAYQNGAPIRLGDVATVEQGAENSWLGAWANKEQAIVMNVQRQPGANIISTADSIRQMLPQLTESLPKSVKVTVLSDRTTNIRASVDDTQFELMMAIALVVMIIYLFLRNIPATIIPGVAVPLSLIGTFAVMVFLDFSINNLTLMALTIATGFVVDDAIVVIENISRYIEKGEKPLAAALKGAGEIGFTIISLTFSLIAVLIPLLFMGDIVGRLFREFAITLAVAILISAVVSLTLTPMMCARMLSQESLRKQNRFSRASEKMFDRIIAAYGRGLAKVLNHPWLTLSVALSTLLLSVLLWVFIPKGFFPVQDNGIIQGTLQAPQSSSFANMAQRQRQVADVILQDPAVQSLTSFVGVDGTNPSLNSARLQINLKPLDERDDRVQKVIARLQTAVDKVPGVDLFLQPTQDLTIDTQVSRTQYQFTLQATSLDALSTWVPQLMEKLQQLPQLSDVSSDWQDKGLVAYVNVDRDSASRLGISMADVDNALYNAFGQRLISTIYTQANQYRVVLEHNTENTPGLAALDTIRLTSSDGGVVPLSSIAKIEPRFAPLSINHLDQFPVTTISFNVPDNYSLGDAVQAIMDTEKTLNLPVDITTQFQGSTLAFQSALGSTVWLIVAAVVAMYIVLGILYESFIHPITILSTLPTAGVGALLALMIAGSELDVIAIIGIILLIGIVKKNAIMMIDFALAAEREQGMSPREAIYQACLLRFRPILMTTLAALLGALPLMLSTGVGAELRRPLGIGMVGGLIVSQVLTLFTTPVIYLLFDRLALWTKSRFARHEEEA.

A run of 12 helical transmembrane segments spans residues 16-36 (FIMR…AGII), 347-367 (LMMA…NIPA), 369-389 (IIPG…MVFL), 396-416 (LTLM…IVVI), 440-460 (IGFT…PLLF), 472-492 (FAIT…TLTP), 537-557 (WLTL…WVFI), 863-883 (LGST…VLGI), 888-908 (FIHP…ALLA), 911-931 (IAGS…IGIV), 968-988 (ILMT…STGV), and 998-1018 (IGMV…TPVI).

Belongs to the resistance-nodulation-cell division (RND) (TC 2.A.6) family. MdtB subfamily. Part of a tripartite efflux system composed of MdtA, MdtB and MdtC. MdtB forms a heteromultimer with MdtC.

The protein localises to the cell inner membrane. Its function is as follows. The MdtABC tripartite complex confers resistance against novobiocin and deoxycholate. The protein is Multidrug resistance protein MdtB of Escherichia coli O81 (strain ED1a).